We begin with the raw amino-acid sequence, 253 residues long: Acetylglutamate kinase (253 aa).

Residues 37–38, Arg-59, and Asn-149 contribute to the substrate site; that span reads GG.

It belongs to the acetylglutamate kinase family. ArgB subfamily.

It is found in the cytoplasm. It catalyses the reaction N-acetyl-L-glutamate + ATP = N-acetyl-L-glutamyl 5-phosphate + ADP. It participates in amino-acid biosynthesis; L-arginine biosynthesis; N(2)-acetyl-L-ornithine from L-glutamate: step 2/4. Functionally, catalyzes the ATP-dependent phosphorylation of N-acetyl-L-glutamate. This chain is Acetylglutamate kinase, found in Rubrobacter xylanophilus (strain DSM 9941 / JCM 11954 / NBRC 16129 / PRD-1).